Consider the following 345-residue polypeptide: Prenyltransferase ltmC (345 aa).

His112 is a binding site for substrate. Positions 119 and 123 each coordinate Mg(2+). Residue Arg128 participates in substrate binding. Asn130 carries N-linked (GlcNAc...) asparagine glycosylation. The substrate site is built by Lys212, Thr213, Gln243, Asn250, and Lys260.

It belongs to the FPP/GGPP synthase family. It depends on Mg(2+) as a cofactor.

It participates in secondary metabolite biosynthesis. In terms of biological role, prenyltransferase; part of the gene cluster that mediates the biosynthesis of lolitrems, indole-diterpene mycotoxins that are potent tremorgens in mammals, and are synthesized by clavicipitaceous fungal endophytes in association with their grass hosts. The geranylgeranyl diphosphate (GGPP) synthase ltmG is proposed to catalyze the first step in lolitrem biosynthesis. LtmG catalyzes a series of iterative condensations of isopentenyl diphosphate (IPP) with dimethylallyl diphosphate (DMAPP), geranyl diphosphate (GPP), and farnesyl diphosphate (FPP), to form GGPP. GGPP then condenses with indole-3-glycerol phosphate to form 3-geranylgeranylindole, an acyclic intermediate, to be incorporated into paxilline. Either ltmG or ltmC could be responsible for this step, as both are putative prenyl transferases. The FAD-dependent monooxygenase ltmM then catalyzes the epoxidation of the two terminal alkenes of the geranylgeranyl moiety, which is subsequently cyclized by ltmB, to paspaline. The cytochrome P450 monooxygenases ltmQ and ltmP can sequentially oxidize paspaline to terpendole E and terpendole F. Alternatively, ltmP converts paspaline to an intermediate which is oxidized by ltmQ to terpendole F. LtmF, ltmK, ltmE and ltmJ appear to be unique to the epichloe endophytes. The prenyltransferase ltmF is involved in the 27-hydroxyl-O-prenylation. The cytochrome P450 monooxygenase ltmK is required for the oxidative acetal ring formation. The multi-functional prenyltransferase ltmE is required for C20- and C21-prenylations of the indole ring of paspalanes and acts together with the cytochrome P450 monooxygenase ltmJ to yield lolitremanes by multiple oxidations and ring closures. The stereoisomer pairs of lolitriol and lolitrem N or lolitrem B and lolitrem F may be attributed to variations in the way in which ring closure can occur under the action of ltmJ. While the major product of this pathway is lolitrem B, the prenyl transferases and cytochrome P450 monooxygenases identified in this pathway have a remarkable versatility in their regio- and stereo-specificities to generate a diverse range of metabolites that are products of a metabolic grid rather than a linear pathway. This Epichloe festucae var. lolii (Neotyphodium lolii) protein is Prenyltransferase ltmC.